The primary structure comprises 489 residues: Male-specific lethal 1-like 1 (489 aa).

2 disordered regions span residues 126–164 (PMVS…VRKG) and 224–311 (VKKD…EDMQ). Residues 179-227 (LLLQLELIEQQQKHLHNKNKEIEDLKAEKEMLMARIERMEHRLQMVKKD) are a coiled coil. Residues 347-466 (TVEVPSWRES…LKQQDFDLPW (120 aa)) form the PEHE domain. An interaction with KAT8 HAT domain region spans residues 371–389 (ECLDDSVFLKRHSKLELDE). Positions 380–394 (KRHSKLELDEKRRKR) match the Bipartite nuclear localization signal motif.

Belongs to the msl-1 family. In terms of assembly, component of a multisubunit histone acetyltransferase complex (MSL). Interacts (via PEHE domain) with KAT8 (via HAT domain) and MSL3 (via MRG domain); both interactions are direct.

The protein resides in the nucleus. Its subcellular location is the nucleoplasm. The protein localises to the nucleus speckle. Its function is as follows. Component of histone acetyltransferase complex. Within MSL complex, promotes ubiquitination of histone H2B. The protein is Male-specific lethal 1-like 1 (msl1l1) of Danio rerio (Zebrafish).